The primary structure comprises 388 residues: GTPase Obg (388 aa).

The Obg domain maps to 1-159; the sequence is MKFVDEAVIK…RELRLELLLL (159 aa). Positions 160-333 constitute an OBG-type G domain; it reads ADVGMLGLPN…LCYKLADFME (174 aa). Residues 166 to 173, 191 to 195, 213 to 216, 283 to 286, and 314 to 316 contribute to the GTP site; these read GLPNAGKS, FTTLI, DIPG, NKVD, and SAV. The Mg(2+) site is built by Ser-173 and Thr-193. The interval 359–380 is disordered; that stretch reads NQGEVITEDDDDWDDWDDEEDD. The span at 364–380 shows a compositional bias: acidic residues; sequence ITEDDDDWDDWDDEEDD.

Belongs to the TRAFAC class OBG-HflX-like GTPase superfamily. OBG GTPase family. In terms of assembly, monomer. Requires Mg(2+) as cofactor.

It localises to the cytoplasm. In terms of biological role, an essential GTPase which binds GTP, GDP and possibly (p)ppGpp with moderate affinity, with high nucleotide exchange rates and a fairly low GTP hydrolysis rate. Plays a role in control of the cell cycle, stress response, ribosome biogenesis and in those bacteria that undergo differentiation, in morphogenesis control. This Vibrio vulnificus (strain YJ016) protein is GTPase Obg.